A 420-amino-acid polypeptide reads, in one-letter code: Histidine--tRNA ligase (420 aa).

This sequence belongs to the class-II aminoacyl-tRNA synthetase family. In terms of assembly, homodimer.

It localises to the cytoplasm. It catalyses the reaction tRNA(His) + L-histidine + ATP = L-histidyl-tRNA(His) + AMP + diphosphate + H(+). The polypeptide is Histidine--tRNA ligase (Nitrosomonas europaea (strain ATCC 19718 / CIP 103999 / KCTC 2705 / NBRC 14298)).